We begin with the raw amino-acid sequence, 1872 residues long: Ral GTPase-activating protein subunit alpha-2 (1872 aa).

Residues 350–370 (DGAGSTEQDKSHSNSSTLSDR) are disordered. Phosphoserine occurs at positions 373, 376, and 379. Over residues 445–469 (PDKKDVAQEDADKLGLSETDSKEAS) the composition is skewed to basic and acidic residues. The interval 445–481 (PDKKDVAQEDADKLGLSETDSKEASSESSGHKRSSSW) is disordered. S486 carries the post-translational modification Phosphoserine. S696 carries the post-translational modification Phosphoserine; by PKB. 2 disordered regions span residues 711–730 (FRSA…NTVR) and 758–813 (QQVP…GITM). A Phosphothreonine; by PKB modification is found at T715. Composition is skewed to polar residues over residues 758–768 (QQVPRSSSTSD) and 775–795 (SDSS…SEPK). A compositionally biased stretch (basic and acidic residues) spans 796–810 (SVQESKGHVTHEHEG). A phosphoserine mark is found at S819 and S820. The segment at 831 to 851 (QQAHGRCRQRQTSESTGSDTV) is disordered. Residues 840 to 849 (RQTSESTGSD) show a composition bias toward polar residues. S1592 bears the Phosphoserine mark. A Rap-GAP domain is found at 1634–1842 (LKNLDSRQCR…EERALYLEAI (209 aa)).

As to quaternary structure, component of the heterodimeric RalGAP2 complex with RALGAPB. Heterodimerization is required for activity. As to expression, abundantly expressed in testis, pancreas, lung, thymus, brown fat, and white fat.

The protein localises to the cytoplasm. Its function is as follows. Catalytic subunit of the heterodimeric RalGAP2 complex which acts as a GTPase activator for the Ras-like small GTPases RALA and RALB. This is Ral GTPase-activating protein subunit alpha-2 (Ralgapa2) from Mus musculus (Mouse).